The following is a 160-amino-acid chain: UPF0479 membrane protein YLL066W-A (160 aa).

The next 2 helical transmembrane spans lie at 39–59 (IVFC…KVLQ) and 136–156 (VPMI…ISQH).

The protein belongs to the UPF0479 family.

It is found in the membrane. The chain is UPF0479 membrane protein YLL066W-A from Saccharomyces cerevisiae (strain ATCC 204508 / S288c) (Baker's yeast).